The sequence spans 1364 residues: Collagen alpha-2(I) chain (1364 aa).

Positions 1–22 (MLSFVDTRTLLLLAVTSCLATC) are cleaved as a signal peptide. A Pyrrolidone carboxylic acid modification is found at Q23. A propeptide spans 23-79 (QSLQEATARKGPSGDRGPRGERGPPGPPGRDGDDGIPGPPGPPGPPGPPGLGGNFAA) (N-terminal propeptide). A disordered region spans residues 26-1128 (QEATARKGPS…QPRSPTSLRP (1103 aa)). Positions 34-44 (PSGDRGPRGER) are enriched in basic and acidic residues. Residues 59 to 71 (PGPPGPPGPPGPP) show a composition bias toward pro residues. Pyrrolidone carboxylic acid is present on Q80. Position 84 is an allysine (K84). Over residues 93 to 130 (LMGPRGPPGASGAPGPQGFQGPPGEPGEPGQTGPAGAR) the composition is skewed to low complexity. 12 positions are modified to 4-hydroxyproline: P100, P106, P115, P118, P121, P133, P136, P145, P151, P166, P169, and P172. Basic and acidic residues predominate over residues 139–153 (AGEDGHPGKPGRPGE). Position 175 is a 5-hydroxylysine; alternate (K175). An O-linked (Gal...) hydroxylysine; alternate glycan is attached at K175. 4-hydroxyproline occurs at positions 190 and 193. K196 carries the post-translational modification 5-hydroxylysine. 4-hydroxyproline is present on residues P199, P202, P208, P217, P226, P253, P256, and P259. Residues 223–252 (VGAPGPAGARGSDGSVGPVGPAGPIGSAGP) show a composition bias toward low complexity. K262 is modified (5-hydroxylysine). P271, P286, P295, and P304 each carry 4-hydroxyproline. Positions 277–291 (AGPRGEVGLPGLSGP) are enriched in low complexity. Positions 298–319 (PGANGLPGAKGAAGLPGVAGAP) are enriched in low complexity. K307 carries the post-translational modification 5-hydroxylysine. 4-hydroxyproline is present on residues P313, P319, P322, P328, and P346. A compositionally biased stretch (low complexity) spans 328-343 (PGPVGAAGATGARGLV). K352 is modified (5-hydroxylysine). Residues P361, P367, P370, P391, P394, P400, P406, P439, and P442 each carry the 4-hydroxyproline modification. Residues 396-406 (LRGNPGSRGLP) are compositionally biased toward low complexity. Composition is skewed to low complexity over residues 468 to 487 (LPGIDGRPGPIGPAGARGEP) and 511 to 535 (AGLAGARGAPGPDGNNGAQGPPGLQ). The span at 536 to 545 (GVQGGKGEQG) shows a compositional bias: gly residues. 4 stretches are compositionally biased toward low complexity: residues 592–609 (PGESGAAGPTGPIGSRGP), 621–643 (EPGVVGAPGTAGPSGPSGLPGER), 666–688 (SPGRDGARGAPGAIGAPGPAGAN), and 715–735 (VGPAGPNGFAGPAGAAGQPGA). The span at 736 to 745 (KGERGTKGPK) shows a compositional bias: basic and acidic residues. Over residues 748–763 (NGPVGPTGPVGAAGPS) the composition is skewed to low complexity. Gly residues predominate over residues 773 to 782 (GSRGDGGPPG). 5 stretches are compositionally biased toward low complexity: residues 783 to 793 (ATGFPGAAGRT), 861 to 874 (PQGLLGAPGFLGLP), 891 to 930 (EPGPLGIAGPPGARGPPGNVGNPGVNGAPGEAGRDGNPGN), 948 to 961 (YPGNAGPVGAAGAP), and 978 to 999 (EPGPAGAVGPAGAVGPRGPSGP). Over residues 1003–1014 (RGDKGEPGDKGP) the composition is skewed to basic and acidic residues. Over residues 1087–1101 (AGPPGPPGPPGPPGP) the composition is skewed to pro residues. Positions 1118–1364 (DQPRSPTSLR…RLNIGPVCFK (247 aa)) are cleaved as a propeptide — C-terminal propeptide. The Fibrillar collagen NC1 domain maps to 1131 to 1364 (YEVDATLKSL…RLNIGPVCFK (234 aa)). 3 disulfides stabilise this stretch: C1161-C1193, C1201-C1362, and C1270-C1315. D1179, N1181, Q1182, C1184, and D1187 together coordinate Ca(2+). N1265 carries N-linked (GlcNAc...) asparagine glycosylation.

This sequence belongs to the fibrillar collagen family. In terms of assembly, trimers of one alpha 2(I) and two alpha 1(I) chains. Interacts (via C-terminus) with TMEM131 (via PapD-L domain); the interaction is direct and is involved in assembly and TRAPPIII ER-to-Golgi transport complex-dependent secretion of collagen. Post-translationally, prolines at the third position of the tripeptide repeating unit (G-X-Y) are hydroxylated in some or all of the chains. Forms the fibrils of tendon, ligaments and bones. In bones the fibrils are mineralized with calcium hydroxyapatite.

It is found in the secreted. The protein resides in the extracellular space. The protein localises to the extracellular matrix. In terms of biological role, type I collagen is a member of group I collagen (fibrillar forming collagen). The protein is Collagen alpha-2(I) chain (COL1A2) of Bos taurus (Bovine).